A 461-amino-acid polypeptide reads, in one-letter code: tRNA modification GTPase MnmE (461 aa).

Residues Arg23, Glu88, and Arg127 each contribute to the (6S)-5-formyl-5,6,7,8-tetrahydrofolate site. The TrmE-type G domain maps to 223–382 (GLNTVIVGKP…VEEALVEIVY (160 aa)). Residue Asn233 coordinates K(+). GTP-binding positions include 233–238 (NVGKSS), 252–258 (TEVPGTT), and 277–280 (DTAG). Position 237 (Ser237) interacts with Mg(2+). Residues Thr252, Val254, and Thr257 each contribute to the K(+) site. Thr258 contacts Mg(2+). Lys461 contacts (6S)-5-formyl-5,6,7,8-tetrahydrofolate.

Belongs to the TRAFAC class TrmE-Era-EngA-EngB-Septin-like GTPase superfamily. TrmE GTPase family. In terms of assembly, homodimer. Heterotetramer of two MnmE and two MnmG subunits. It depends on K(+) as a cofactor.

Its subcellular location is the cytoplasm. In terms of biological role, exhibits a very high intrinsic GTPase hydrolysis rate. Involved in the addition of a carboxymethylaminomethyl (cmnm) group at the wobble position (U34) of certain tRNAs, forming tRNA-cmnm(5)s(2)U34. The protein is tRNA modification GTPase MnmE of Alkaliphilus metalliredigens (strain QYMF).